The sequence spans 417 residues: Serine hydroxymethyltransferase (417 aa).

Residues leucine 121 and 125-127 (GHL) contribute to the (6S)-5,6,7,8-tetrahydrofolate site. Position 230 is an N6-(pyridoxal phosphate)lysine (lysine 230). Residue 355-357 (SPF) coordinates (6S)-5,6,7,8-tetrahydrofolate.

Belongs to the SHMT family. Homodimer. It depends on pyridoxal 5'-phosphate as a cofactor.

It is found in the cytoplasm. It carries out the reaction (6R)-5,10-methylene-5,6,7,8-tetrahydrofolate + glycine + H2O = (6S)-5,6,7,8-tetrahydrofolate + L-serine. The protein operates within one-carbon metabolism; tetrahydrofolate interconversion. It functions in the pathway amino-acid biosynthesis; glycine biosynthesis; glycine from L-serine: step 1/1. Its function is as follows. Catalyzes the reversible interconversion of serine and glycine with tetrahydrofolate (THF) serving as the one-carbon carrier. This reaction serves as the major source of one-carbon groups required for the biosynthesis of purines, thymidylate, methionine, and other important biomolecules. Also exhibits THF-independent aldolase activity toward beta-hydroxyamino acids, producing glycine and aldehydes, via a retro-aldol mechanism. This is Serine hydroxymethyltransferase from Legionella pneumophila (strain Lens).